Here is a 368-residue protein sequence, read N- to C-terminus: N-acetylneuraminate epimerase (368 aa).

The first 19 residues, M1 to A19, serve as a signal peptide directing secretion. 7 Kelch repeats span residues T40–D84, N86–N137, K139–A173, H174–G219, T222–G265, E287–N336, and L338–Q367. The Proton acceptor role is filled by E228.

Belongs to the NanM family. Homodimer.

It is found in the periplasm. It carries out the reaction N-acetyl-alpha-neuraminate = N-acetyl-beta-neuraminate. Its function is as follows. Converts alpha-N-acetylneuranimic acid (Neu5Ac) to the beta-anomer, accelerating the equilibrium between the alpha- and beta-anomers. Probably facilitates sialidase-negative bacteria to compete successfully for limited amounts of extracellular Neu5Ac, which is likely taken up in the beta-anomer. In addition, the rapid removal of sialic acid from solution might be advantageous to the bacterium to damp down host responses. This is N-acetylneuraminate epimerase from Escherichia coli O9:H4 (strain HS).